A 328-amino-acid polypeptide reads, in one-letter code: Tyrosine--tRNA ligase (328 aa).

An L-tyrosine-binding site is contributed by Y33. A 'HIGH' region motif is present at residues 38–46 (PSGVLHIGH). Y154, Q158, D161, and Q176 together coordinate L-tyrosine. The interval 193 to 227 (EPPTSLHTPLIADLGTGRGKMSSSEGVTISMEDSR) is disordered. The 'KMSKS' region signature appears at 212–216 (KMSSS). ATP is bound at residue S215.

Belongs to the class-I aminoacyl-tRNA synthetase family. TyrS type 3 subfamily. As to quaternary structure, homodimer.

Its subcellular location is the cytoplasm. It catalyses the reaction tRNA(Tyr) + L-tyrosine + ATP = L-tyrosyl-tRNA(Tyr) + AMP + diphosphate + H(+). In terms of biological role, catalyzes the attachment of tyrosine to tRNA(Tyr) in a two-step reaction: tyrosine is first activated by ATP to form Tyr-AMP and then transferred to the acceptor end of tRNA(Tyr). The polypeptide is Tyrosine--tRNA ligase (Halorubrum lacusprofundi (strain ATCC 49239 / DSM 5036 / JCM 8891 / ACAM 34)).